The following is a 560-amino-acid chain: Protein AATF (560 aa).

The residue at position 2 (Ala-2) is an N-acetylalanine. Phosphoserine is present on residues Ser-61 and Ser-63. The tract at residues 76–208 (TSRKAWNEDH…GDRNSEDDGV (133 aa)) is disordered. Over residues 94–129 (SDEEISDEEGSGDEDSEGLGLEEYDEDDLGAAEEQE) the composition is skewed to acidic residues. Ser-150 and Ser-155 each carry phosphoserine. The span at 156–165 (DFEKFTKGMD) shows a compositional bias: basic and acidic residues. The segment covering 168–195 (GSSEEEEDEESGMEEGDDAEDSQGESEE) has biased composition (acidic residues). Phosphoserine occurs at positions 203, 273, 316, 320, and 321. The POLR2J binding stretch occupies residues 273-315 (SALKNSHKALKALLRSLVGLQEELLFQYPDTRYLVDGTKPNAG). The tract at residues 309–333 (GTKPNAGSEEISSEDDELVEEKKQQ) is disordered. Residues 316–372 (SEEISSEDDELVEEKKQQRRRVPAKRKLEMEDYPSFMAKRFADFTVYRNRTLQKWHD) are RB1 binding. The interval 373 to 472 (KTKLASGKLG…FYHQLLRELI (100 aa)) is RB1 and SP1 binding.

It belongs to the AATF family. In terms of assembly, part of the small subunit (SSU) processome, composed of more than 70 proteins and the RNA chaperone small nucleolar RNA (snoRNA) U3. Interacts with POLR2J, RB1/RB, RBL1/P107 and RBL2/P130. Interacts with PAWR and SP1. May also bind MAPT. Post-translationally, hyperphosphorylated during the G1/S phase transition. As to expression, ubiquitously expressed. Expressed at high levels in brain, heart, kidney, placenta and thymus.

The protein localises to the nucleus. The protein resides in the nucleolus. Functionally, part of the small subunit (SSU) processome, first precursor of the small eukaryotic ribosomal subunit. During the assembly of the SSU processome in the nucleolus, many ribosome biogenesis factors, an RNA chaperone and ribosomal proteins associate with the nascent pre-rRNA and work in concert to generate RNA folding, modifications, rearrangements and cleavage as well as targeted degradation of pre-ribosomal RNA by the RNA exosome. May function as a general inhibitor of the histone deacetylase HDAC1. Binding to the pocket region of RB1 may displace HDAC1 from RB1/E2F complexes, leading to activation of E2F target genes and cell cycle progression. Conversely, displacement of HDAC1 from SP1 bound to the CDKN1A promoter leads to increased expression of this CDK inhibitor and blocks cell cycle progression. Also antagonizes PAWR mediated induction of aberrant amyloid peptide production in Alzheimer disease (presenile and senile dementia), although the molecular basis for this phenomenon has not been described to date. The sequence is that of Protein AATF from Homo sapiens (Human).